A 941-amino-acid chain; its full sequence is Isoleucine--tRNA ligase (941 aa).

Residues 58–68 (PYANGDIHIGH) carry the 'HIGH' region motif. E562 serves as a coordination point for L-isoleucyl-5'-AMP. Positions 603–607 (KMSKS) match the 'KMSKS' region motif. Position 606 (K606) interacts with ATP. C904, C907, C924, and C927 together coordinate Zn(2+).

The protein belongs to the class-I aminoacyl-tRNA synthetase family. IleS type 1 subfamily. As to quaternary structure, monomer. Zn(2+) serves as cofactor.

Its subcellular location is the cytoplasm. The enzyme catalyses tRNA(Ile) + L-isoleucine + ATP = L-isoleucyl-tRNA(Ile) + AMP + diphosphate. Functionally, catalyzes the attachment of isoleucine to tRNA(Ile). As IleRS can inadvertently accommodate and process structurally similar amino acids such as valine, to avoid such errors it has two additional distinct tRNA(Ile)-dependent editing activities. One activity is designated as 'pretransfer' editing and involves the hydrolysis of activated Val-AMP. The other activity is designated 'posttransfer' editing and involves deacylation of mischarged Val-tRNA(Ile). The chain is Isoleucine--tRNA ligase from Alkalilimnicola ehrlichii (strain ATCC BAA-1101 / DSM 17681 / MLHE-1).